An 875-amino-acid chain; its full sequence is Alanine--tRNA ligase (875 aa).

Zn(2+) is bound by residues His-564, His-568, Cys-666, and His-670.

This sequence belongs to the class-II aminoacyl-tRNA synthetase family. Zn(2+) is required as a cofactor.

It is found in the cytoplasm. It carries out the reaction tRNA(Ala) + L-alanine + ATP = L-alanyl-tRNA(Ala) + AMP + diphosphate. Functionally, catalyzes the attachment of alanine to tRNA(Ala) in a two-step reaction: alanine is first activated by ATP to form Ala-AMP and then transferred to the acceptor end of tRNA(Ala). Also edits incorrectly charged Ser-tRNA(Ala) and Gly-tRNA(Ala) via its editing domain. The sequence is that of Alanine--tRNA ligase from Mannheimia succiniciproducens (strain KCTC 0769BP / MBEL55E).